Consider the following 397-residue polypeptide: Exodeoxyribonuclease 7 large subunit (397 aa).

It belongs to the XseA family. Heterooligomer composed of large and small subunits.

It is found in the cytoplasm. It catalyses the reaction Exonucleolytic cleavage in either 5'- to 3'- or 3'- to 5'-direction to yield nucleoside 5'-phosphates.. Bidirectionally degrades single-stranded DNA into large acid-insoluble oligonucleotides, which are then degraded further into small acid-soluble oligonucleotides. This Anaplasma marginale (strain Florida) protein is Exodeoxyribonuclease 7 large subunit.